The chain runs to 136 residues: MNSQIKNKAVYWGTGRRKTSVARVRLIPGNGQIKINGRSGDDYLNFNPSHLNSVKAPLQTLGLENSYDIFVNVFGGGLTGQADAIKQGAARALCDLSPDNRKPLKTEGHLSRDPRAKERRKYGLKKARKAPQFSKR.

Positions 96 to 136 (LSPDNRKPLKTEGHLSRDPRAKERRKYGLKKARKAPQFSKR) are disordered. The span at 98–116 (PDNRKPLKTEGHLSRDPRA) shows a compositional bias: basic and acidic residues. The span at 117-136 (KERRKYGLKKARKAPQFSKR) shows a compositional bias: basic residues.

It belongs to the universal ribosomal protein uS9 family.

The chain is Small ribosomal subunit protein uS9 from Prochlorococcus marinus (strain MIT 9515).